Consider the following 268-residue polypeptide: Tryptophan synthase alpha chain (268 aa).

Active-site proton acceptor residues include Glu-49 and Asp-60.

Belongs to the TrpA family. As to quaternary structure, tetramer of two alpha and two beta chains.

The catalysed reaction is (1S,2R)-1-C-(indol-3-yl)glycerol 3-phosphate + L-serine = D-glyceraldehyde 3-phosphate + L-tryptophan + H2O. Its pathway is amino-acid biosynthesis; L-tryptophan biosynthesis; L-tryptophan from chorismate: step 5/5. Functionally, the alpha subunit is responsible for the aldol cleavage of indoleglycerol phosphate to indole and glyceraldehyde 3-phosphate. The sequence is that of Tryptophan synthase alpha chain from Xanthomonas euvesicatoria pv. vesicatoria (strain 85-10) (Xanthomonas campestris pv. vesicatoria).